The following is a 103-amino-acid chain: Large ribosomal subunit protein bL21 (103 aa).

It belongs to the bacterial ribosomal protein bL21 family. Part of the 50S ribosomal subunit. Contacts protein L20.

Its function is as follows. This protein binds to 23S rRNA in the presence of protein L20. The sequence is that of Large ribosomal subunit protein bL21 from Chromohalobacter salexigens (strain ATCC BAA-138 / DSM 3043 / CIP 106854 / NCIMB 13768 / 1H11).